A 177-amino-acid polypeptide reads, in one-letter code: Large ribosomal subunit protein uL6 (177 aa).

Belongs to the universal ribosomal protein uL6 family. In terms of assembly, part of the 50S ribosomal subunit.

Its function is as follows. This protein binds to the 23S rRNA, and is important in its secondary structure. It is located near the subunit interface in the base of the L7/L12 stalk, and near the tRNA binding site of the peptidyltransferase center. The protein is Large ribosomal subunit protein uL6 of Variovorax paradoxus (strain S110).